A 132-amino-acid chain; its full sequence is Gonadotropin subunit beta-1 (132 aa).

The signal sequence occupies residues 1-17; the sequence is MMRGVTMVLLLPMLVWA. 5 disulfides stabilise this stretch: cysteine 25–cysteine 73, cysteine 39–cysteine 88, cysteine 50–cysteine 104, cysteine 54–cysteine 106, and cysteine 109–cysteine 116. Asparagine 29 and asparagine 46 each carry an N-linked (GlcNAc...) asparagine glycan.

It belongs to the glycoprotein hormones subunit beta family. In terms of assembly, heterodimer of an alpha and a beta chain.

It localises to the secreted. Functionally, involved in gametogenesis and steroidogenesis. The sequence is that of Gonadotropin subunit beta-1 (cgba) from Ictalurus punctatus (Channel catfish).